The sequence spans 531 residues: 2-isopropylmalate synthase (531 aa).

The Pyruvate carboxyltransferase domain occupies 8 to 284 (IIIFDTTLRD…LTNIDTKQIY (277 aa)). The Mn(2+) site is built by aspartate 17, histidine 208, histidine 210, and asparagine 244. The tract at residues 408–531 (RVELVQVSCG…TQDKQTEVTA (124 aa)) is regulatory domain.

It belongs to the alpha-IPM synthase/homocitrate synthase family. LeuA type 1 subfamily. As to quaternary structure, homodimer. It depends on Mn(2+) as a cofactor.

Its subcellular location is the cytoplasm. It catalyses the reaction 3-methyl-2-oxobutanoate + acetyl-CoA + H2O = (2S)-2-isopropylmalate + CoA + H(+). It participates in amino-acid biosynthesis; L-leucine biosynthesis; L-leucine from 3-methyl-2-oxobutanoate: step 1/4. Catalyzes the condensation of the acetyl group of acetyl-CoA with 3-methyl-2-oxobutanoate (2-ketoisovalerate) to form 3-carboxy-3-hydroxy-4-methylpentanoate (2-isopropylmalate). The protein is 2-isopropylmalate synthase of Nostoc sp. (strain PCC 7120 / SAG 25.82 / UTEX 2576).